A 317-amino-acid chain; its full sequence is Metaxin-1 (317 aa).

Glycyl lysine isopeptide (Lys-Gly) (interchain with G-Cter in ubiquitin) cross-links involve residues K38, K41, and K78. Residues 164 to 184 form a helical membrane-spanning segment; the sequence is EELEKELYQEAQECLTLLSQR.

This sequence belongs to the metaxin family. Interacts with MTX2/metaxin-2. Associates with the mitochondrial contact site and cristae organizing system (MICOS) complex, composed of at least MICOS10/MIC10, CHCHD3/MIC19, CHCHD6/MIC25, APOOL/MIC27, IMMT/MIC60, APOO/MIC23/MIC26 and QIL1/MIC13. This complex was also known under the names MINOS or MitOS complex. The MICOS complex associates with mitochondrial outer membrane proteins SAMM50, MTX1 and MTX2 (together described as components of the mitochondrial outer membrane sorting assembly machinery (SAM) complex) and DNAJC11, mitochondrial inner membrane protein TMEM11 and with HSPA9. The MICOS and SAM complexes together with DNAJC11 are part of a large protein complex spanning both membranes termed the mitochondrial intermembrane space bridging (MIB) complex. Interacts with ARMC1. Post-translationally, ubiquitinated by PRKN during mitophagy, leading to its degradation and enhancement of mitophagy. Deubiquitinated by USP30.

It localises to the mitochondrion outer membrane. In terms of biological role, involved in transport of proteins into the mitochondrion. Essential for embryonic development. In Bos taurus (Bovine), this protein is Metaxin-1 (MTX1).